The following is a 264-amino-acid chain: Undecaprenyl-diphosphatase (264 aa).

The next 8 membrane-spanning stretches (helical) occupy residues methionine 1–isoleucine 21, glutamine 39–phenylalanine 59, serine 83–phenylalanine 103, serine 113–leucine 133, methionine 143–valine 163, alanine 184–isoleucine 204, leucine 220–isoleucine 240, and isoleucine 243–phenylalanine 263.

This sequence belongs to the UppP family.

The protein resides in the cell inner membrane. The enzyme catalyses di-trans,octa-cis-undecaprenyl diphosphate + H2O = di-trans,octa-cis-undecaprenyl phosphate + phosphate + H(+). In terms of biological role, catalyzes the dephosphorylation of undecaprenyl diphosphate (UPP). Confers resistance to bacitracin. The sequence is that of Undecaprenyl-diphosphatase from Campylobacter concisus (strain 13826).